The chain runs to 428 residues: Dihydroorotase (428 aa).

Positions 59 and 61 each coordinate Zn(2+). Residues H61–R63 and N93 each bind substrate. Residues D151, H178, and H231 each contribute to the Zn(2+) site. N277 serves as a coordination point for substrate. D304 is a Zn(2+) binding site. D304 is a catalytic residue. Substrate is bound by residues H308 and F322 to G323.

This sequence belongs to the metallo-dependent hydrolases superfamily. DHOase family. Class I DHOase subfamily. Requires Zn(2+) as cofactor.

The catalysed reaction is (S)-dihydroorotate + H2O = N-carbamoyl-L-aspartate + H(+). It functions in the pathway pyrimidine metabolism; UMP biosynthesis via de novo pathway; (S)-dihydroorotate from bicarbonate: step 3/3. Functionally, catalyzes the reversible cyclization of carbamoyl aspartate to dihydroorotate. This Bacillus cytotoxicus (strain DSM 22905 / CIP 110041 / 391-98 / NVH 391-98) protein is Dihydroorotase.